We begin with the raw amino-acid sequence, 464 residues long: DNA primase DnaG (464 aa).

The Toprim domain occupies 198-272; the sequence is DSIIVVEGRA…DVDYVARAPE (75 aa). Positions 204, 246, and 248 each coordinate Mg(2+). A compositionally biased stretch (basic and acidic residues) spans 315-333; it reads RESEGERQPRQVTKPEPEV. A disordered region spans residues 315–351; it reads RESEGERQPRQVTKPEPEVVKAQPKAETPEEKREPAT.

This sequence belongs to the archaeal DnaG primase family. Forms a ternary complex with MCM helicase and DNA. Component of the archaeal exosome complex. Mg(2+) is required as a cofactor.

It carries out the reaction ssDNA + n NTP = ssDNA/pppN(pN)n-1 hybrid + (n-1) diphosphate.. In terms of biological role, RNA polymerase that catalyzes the synthesis of short RNA molecules used as primers for DNA polymerase during DNA replication. Also part of the exosome, which is a complex involved in RNA degradation. Acts as a poly(A)-binding protein that enhances the interaction between heteromeric, adenine-rich transcripts and the exosome. The polypeptide is DNA primase DnaG (Thermococcus kodakarensis (strain ATCC BAA-918 / JCM 12380 / KOD1) (Pyrococcus kodakaraensis (strain KOD1))).